Consider the following 248-residue polypeptide: 5'-nucleotidase SurE (248 aa).

Positions 8, 9, 39, and 91 each coordinate a divalent metal cation.

The protein belongs to the SurE nucleotidase family. It depends on a divalent metal cation as a cofactor.

It localises to the cytoplasm. It carries out the reaction a ribonucleoside 5'-phosphate + H2O = a ribonucleoside + phosphate. Nucleotidase that shows phosphatase activity on nucleoside 5'-monophosphates. The chain is 5'-nucleotidase SurE from Geotalea daltonii (strain DSM 22248 / JCM 15807 / FRC-32) (Geobacter daltonii).